Consider the following 172-residue polypeptide: Small ribosomal subunit protein uS5 (172 aa).

The S5 DRBM domain occupies 16 to 79 (LKDRLVAINR…ESAKKNLTRV (64 aa)).

It belongs to the universal ribosomal protein uS5 family. In terms of assembly, part of the 30S ribosomal subunit. Contacts proteins S4 and S8.

With S4 and S12 plays an important role in translational accuracy. In terms of biological role, located at the back of the 30S subunit body where it stabilizes the conformation of the head with respect to the body. This chain is Small ribosomal subunit protein uS5, found in Bacteroides fragilis (strain ATCC 25285 / DSM 2151 / CCUG 4856 / JCM 11019 / LMG 10263 / NCTC 9343 / Onslow / VPI 2553 / EN-2).